The primary structure comprises 185 residues: Ion-translocating oxidoreductase complex subunit B (185 aa).

The segment at 1 to 26 (MNHILLIILIFAALALIFGLLLGFAA) is hydrophobic. Residues 32 to 90 (ESDPIVDQLDALLPQTQCGQCGYPGCRPYAEAIANGDSINKCVPGGAQTIQNIADLMGV) form the 4Fe-4S domain. Positions 49, 52, 57, 73, 115, 118, 121, 125, 145, 148, 151, and 155 each coordinate [4Fe-4S] cluster. 2 4Fe-4S ferredoxin-type domains span residues 106 to 135 (RVAF…GAPK) and 136 to 165 (LMHT…MIEL).

The protein belongs to the 4Fe4S bacterial-type ferredoxin family. RnfB subfamily. In terms of assembly, the complex is composed of six subunits: RnfA, RnfB, RnfC, RnfD, RnfE and RnfG. [4Fe-4S] cluster is required as a cofactor.

It localises to the cell inner membrane. Its function is as follows. Part of a membrane-bound complex that couples electron transfer with translocation of ions across the membrane. The sequence is that of Ion-translocating oxidoreductase complex subunit B from Tolumonas auensis (strain DSM 9187 / NBRC 110442 / TA 4).